A 153-amino-acid chain; its full sequence is Ribosome maturation factor RimP (153 aa).

It belongs to the RimP family.

The protein resides in the cytoplasm. Required for maturation of 30S ribosomal subunits. In Clostridium botulinum (strain Langeland / NCTC 10281 / Type F), this protein is Ribosome maturation factor RimP.